Consider the following 1347-residue polypeptide: Serine-aspartate repeat-containing protein D (1347 aa).

A signal peptide spans 1 to 35; it reads MLNRENKTAITRKGMVSNRLNKFSIRKYTVGTASI. The short motif at 23-34 is the YSIRK-G/S signaling motif element; sequence FSIRKYTVGTAS. A ligand binding A region region spans residues 36–568; the sequence is LVGTTLIFGL…NNQSGGAGQE (533 aa). The segment at 55-185 is disordered; that stretch reads STNKELNEAT…NKKVDAKTES (131 aa). Polar residues-rich tracts occupy residues 62–71 and 94–109; these read EATTSASDNQ and EMVS…NGNK. Positions 130–145 are enriched in basic and acidic residues; it reads KSDEQASPKSTNEDLN. Composition is skewed to polar residues over residues 146–155 and 163–173; these read TKQTISNQEA and NKSVVNAQPTN. Residues 174–183 show a composition bias toward basic and acidic residues; it reads EENKKVDAKT. CNA-B domains lie at 569 to 680, 681 to 791, 792 to 901, 902 to 1012, and 1013 to 1123; these read VYKI…IYKP, KYNL…YKTP, KYNL…FYKP, TYNL…YKTS, and KYSL…EEDT. 3 disordered regions span residues 857–883, 972–992, and 1078–1323; these read ETPS…TSTT, YTPT…GLTT, and EKPA…SNNA. Composition is skewed to polar residues over residues 860 to 869 and 972 to 981; these read SGYTPTQVGS and YTPTSVTSGN. 2 stretches are compositionally biased toward acidic residues: residues 1091–1101 and 1118–1286; these read TEDDKDADGGE and YFEE…DSDS. The short motif at 1310–1314 is the LPXTG sorting signal element; it reads LPETG. T1313 bears the Pentaglycyl murein peptidoglycan amidated threonine mark. Residues 1314 to 1347 constitute a propeptide, removed by sortase; the sequence is GNENSGSNNATLFGGLFAALGSLLLFGRRKKQNK.

The protein belongs to the serine-aspartate repeat-containing protein (SDr) family. In terms of assembly, interacts with host DSG1; this interaction increases S.aureus adherence to keratinocytes.

It localises to the secreted. The protein localises to the cell wall. Cell surface-associated calcium-binding protein which plays an important role in adhesion and pathogenesis. Mediates interactions with components of the extracellular matrix such as host DSG1 to promote bacterial adhesion to host cells. Contributes to the resistance to killing by innate immune components such as neutrophils present in blood and thus attenuates bacterial clearance. This is Serine-aspartate repeat-containing protein D (sdrD) from Staphylococcus aureus (strain MW2).